The following is a 244-amino-acid chain: Phosphate propanoyltransferase (244 aa).

Residue isoleucine 52–alanine 54 coordinates CoA. Zn(2+)-binding residues include histidine 56 and histidine 58. Arginine 106 is a binding site for CoA. Arginine 112 is a binding site for phosphate. Zn(2+) contacts are provided by glutamate 118, histidine 166, histidine 168, and histidine 214. Residue asparagine 221 participates in CoA binding.

The protein belongs to the PduL family. Full-length protein forms large oligomers. Possible homotrimer and monomer, when purified in the absence of the encapsulation peptide (EP, residues 1-20). The EP may influence oligomerization. It depends on Zn(2+) as a cofactor.

The protein resides in the bacterial microcompartment. It carries out the reaction propanoyl-CoA + phosphate = propanoyl phosphate + CoA. Its function is as follows. Part of a bacterial microcompartment (BMC) locus required for growth on plant and algal sugars, including L-fucose and L-rhamnose. Thought to be active on lactyl-CoA in a lactaldehyde-degradation pathway. CoA is regenerated within the BMC via this enzyme, although there must also be cofactor transport across the BMC. Directly targeted to the BMC. The sequence is that of Phosphate propanoyltransferase from Planctopirus limnophila (strain ATCC 43296 / DSM 3776 / IFAM 1008 / Mu 290) (Planctomyces limnophilus).